We begin with the raw amino-acid sequence, 797 residues long: Homoaconitase, mitochondrial (797 aa).

A mitochondrion-targeting transit peptide spans 1–47 (MVARFVPSAMTVLVARRGLAMASTRRGWRGLAVNLKPAAGRQWRQAY). [4Fe-4S] cluster contacts are provided by C404, C471, and C474.

This sequence belongs to the aconitase/IPM isomerase family. It depends on [4Fe-4S] cluster as a cofactor.

The protein resides in the mitochondrion. The enzyme catalyses (2R,3S)-homoisocitrate = cis-homoaconitate + H2O. It functions in the pathway amino-acid biosynthesis; L-lysine biosynthesis via AAA pathway; L-alpha-aminoadipate from 2-oxoglutarate: step 3/5. Functionally, catalyzes the reversible hydration of cis-homoaconitate to (2R,3S)-homoisocitrate, a step in the alpha-aminoadipate pathway for lysine biosynthesis. This chain is Homoaconitase, mitochondrial (LYS4), found in Chaetomium globosum (strain ATCC 6205 / CBS 148.51 / DSM 1962 / NBRC 6347 / NRRL 1970) (Soil fungus).